The primary structure comprises 382 residues: Proton extrusion protein PxcA (382 aa).

4 helical membrane passes run Ile-162 to Val-182, Ala-257 to Val-277, Ile-305 to Leu-325, and Phe-340 to Ile-360.

This sequence belongs to the CemA family.

It is found in the cell inner membrane. Functionally, required for H(+) efflux immediately after light irradiation to form a rapid H(+) concentration gradient across the thylakoid membranes. Together with PxcL, contributes to transient H(+) uptake following dark to light transition. In Parasynechococcus marenigrum (strain WH8102), this protein is Proton extrusion protein PxcA.